The primary structure comprises 205 residues: Dephospho-CoA kinase (205 aa).

The DPCK domain occupies 4-203 (KIGITGGIGS…QKIHYLCSAK (200 aa)). 12-17 (GSGKSV) contributes to the ATP binding site.

Belongs to the CoaE family.

The protein resides in the cytoplasm. The enzyme catalyses 3'-dephospho-CoA + ATP = ADP + CoA + H(+). It functions in the pathway cofactor biosynthesis; coenzyme A biosynthesis; CoA from (R)-pantothenate: step 5/5. Its function is as follows. Catalyzes the phosphorylation of the 3'-hydroxyl group of dephosphocoenzyme A to form coenzyme A. In Bacteroides fragilis (strain ATCC 25285 / DSM 2151 / CCUG 4856 / JCM 11019 / LMG 10263 / NCTC 9343 / Onslow / VPI 2553 / EN-2), this protein is Dephospho-CoA kinase.